Here is a 249-residue protein sequence, read N- to C-terminus: DNA repair protein RecO (249 aa).

The protein belongs to the RecO family.

Involved in DNA repair and RecF pathway recombination. In Desulforudis audaxviator (strain MP104C), this protein is DNA repair protein RecO.